A 546-amino-acid chain; its full sequence is Cholesterol oxidase (546 aa).

The segment at residues 1 to 42 (MTAQQHLSRRRMLGMAAFGAAALAGGTTIAAPRAAAAAKSAA) is a signal peptide (tat-type signal). Y57, G58, E77, G152, N156, G157, M159, and V287 together coordinate FAD. Catalysis depends on proton acceptor residues E398 and H484. Residues G512 and F524 each coordinate FAD.

This sequence belongs to the GMC oxidoreductase family. As to quaternary structure, monomer. The cofactor is FAD. In terms of processing, predicted to be exported by the Tat system. The position of the signal peptide cleavage has been experimentally proven.

It is found in the secreted. The enzyme catalyses cholesterol + O2 = cholest-5-en-3-one + H2O2. It carries out the reaction cholest-5-en-3-one = cholest-4-en-3-one. It functions in the pathway steroid metabolism; cholesterol degradation. In terms of biological role, bifunctional enzyme that catalyzes the oxidation and isomerization of cholesterol to cholestenone (cholest-4-en-3-one), an initial step in the cholesterol degradation process. The cholesterol degradation pathway allows the bacterium to utilize cholesterol as its sole source of carbon and energy. In Streptomyces sp. (strain SA-COO), this protein is Cholesterol oxidase.